A 478-amino-acid chain; its full sequence is Zinc metalloproteinase/disintegrin ussurin (478 aa).

The N-terminal stretch at 1–20 is a signal peptide; the sequence is MIQVLLVTICLAAFPYQGSS. A propeptide spanning residues 21 to 190 is cleaved from the precursor; sequence IILESGNVND…KKASPLVVTT (170 aa). The 197-residue stretch at 193 to 389 folds into the Peptidase M12B domain; that stretch reads RYVELVVVAD…RNPQCILNKP (197 aa). Residues Glu196 and Asp280 each contribute to the Ca(2+) site. 3 disulfides stabilise this stretch: Cys304–Cys384, Cys344–Cys368, and Cys346–Cys351. His329 is a binding site for Zn(2+). Glu330 is an active-site residue. Residues His333 and His339 each contribute to the Zn(2+) site. Residues Cys384 and Asn387 each coordinate Ca(2+). Residues 390–413 constitute a propeptide that is removed on maturation; sequence LRTDIVSTPVSGNELLEAGEECDC. Residues 397-478 form the Disintegrin domain; it reads TPVSGNELLE…AGCPRNPFHA (82 aa). Intrachain disulfides connect Cys411–Cys426, Cys413–Cys421, Cys420–Cys443, Cys434–Cys440, Cys439–Cys464, and Cys452–Cys471. The short motif at 456–458 is the Cell attachment site element; the sequence is RGD.

Belongs to the venom metalloproteinase (M12B) family. P-II subfamily. P-IIa sub-subfamily. In terms of assembly, monomer. The cofactor is Zn(2+). In terms of tissue distribution, expressed by the venom gland.

It is found in the secreted. Impairs hemostasis in the envenomed animal. In terms of biological role, inhibits platelet aggregation induced by ADP, thrombin, platelet-activating factor and collagen. Acts by inhibiting fibrinogen interaction with platelet receptors GPIIb/GPIIIa (ITGA2B/ITGB3). In Gloydius ussuriensis (Ussuri mamushi), this protein is Zinc metalloproteinase/disintegrin ussurin.